Here is a 447-residue protein sequence, read N- to C-terminus: UDP-N-acetylmuramoylalanine--D-glutamate ligase (447 aa).

Residue 112 to 118 (GTNGKST) coordinates ATP.

Belongs to the MurCDEF family.

It is found in the cytoplasm. It catalyses the reaction UDP-N-acetyl-alpha-D-muramoyl-L-alanine + D-glutamate + ATP = UDP-N-acetyl-alpha-D-muramoyl-L-alanyl-D-glutamate + ADP + phosphate + H(+). It participates in cell wall biogenesis; peptidoglycan biosynthesis. Cell wall formation. Catalyzes the addition of glutamate to the nucleotide precursor UDP-N-acetylmuramoyl-L-alanine (UMA). In Legionella pneumophila (strain Lens), this protein is UDP-N-acetylmuramoylalanine--D-glutamate ligase.